A 407-amino-acid chain; its full sequence is Arrestin homolog (407 aa).

It belongs to the arrestin family.

In Locusta migratoria (Migratory locust), this protein is Arrestin homolog.